The primary structure comprises 186 residues: Superoxide dismutase [Cu-Zn] (186 aa).

The signal sequence occupies residues 1–22 (MNMKTLLALAVSAVCSVSVAQA). Cu cation is bound by residues histidine 79, histidine 81, and histidine 104. An intrachain disulfide couples cysteine 86 to cysteine 182. Residues histidine 104, histidine 113, histidine 122, and aspartate 125 each contribute to the Zn(2+) site. Residue histidine 160 coordinates Cu cation.

It belongs to the Cu-Zn superoxide dismutase family. In terms of assembly, homodimer. The cofactor is Cu cation. Zn(2+) serves as cofactor.

It is found in the periplasm. It carries out the reaction 2 superoxide + 2 H(+) = H2O2 + O2. In terms of biological role, destroys radicals which are normally produced within the cells and which are toxic to biological systems. The sequence is that of Superoxide dismutase [Cu-Zn] (sodC) from Neisseria meningitidis serogroup A / serotype 4A (strain DSM 15465 / Z2491).